We begin with the raw amino-acid sequence, 1388 residues long: Rho-associated protein kinase 2 (1388 aa).

A disordered region spans residues M1 to Q27. The region spanning Y92–F354 is the Protein kinase domain. ATP contacts are provided by residues I98–V106 and K121. The active-site Proton acceptor is D214. One can recognise an AGC-kinase C-terminal domain in the interval D357–S425. Residues N363 to V784 form an interaction with PPP1R12A region. The interaction with NPM1 stretch occupies residues P373–L420. T414 is modified (phosphothreonine; by ROCK2). Coiled-coil stretches lie at residues R429–L1024 and D1053–D1131. In terms of domain architecture, REM-1 spans A497–T573. Y722 bears the Phosphotyrosine; by SRC mark. A RhoBD domain is found at T979–P1047. Positions T979 to P1047 are RHOA binding. The residue at position 1137 (S1137) is a Phosphoserine. The region spanning E1150–P1349 is the PH domain. T1212 carries the phosphothreonine modification. The Phorbol-ester/DAG-type zinc finger occupies G1260–C1315. Positions V1345–S1388 are disordered. 2 positions are modified to phosphoserine: S1362 and S1374. The segment covering S1362–R1376 has biased composition (polar residues).

This sequence belongs to the protein kinase superfamily. AGC Ser/Thr protein kinase family. As to quaternary structure, homodimer. Interacts with IRS1. Interacts with RAF1. Interacts with RHOA (activated by GTP), RHOB and RHOC. Interacts with PPP1R12A. Interacts with EP300. Interacts with CHORDC1. Interacts with BRCA2. Interacts with NPM1; this interaction enhances ROCK2 activity. Interacts with SORL1. Interacts with PJVK. It depends on Mg(2+) as a cofactor. Phosphorylation at Tyr-722 reduces its binding to RHOA and is crucial for focal adhesion dynamics. Dephosphorylation by PTPN11 stimulates its RHOA binding activity. Post-translationally, cleaved by granzyme B during apoptosis. This leads to constitutive activation of the kinase and membrane blebbing. In terms of tissue distribution, expressed in the brain (at protein level).

The protein localises to the cytoplasm. It localises to the cell membrane. The protein resides in the nucleus. It is found in the cytoskeleton. Its subcellular location is the microtubule organizing center. The protein localises to the centrosome. The catalysed reaction is L-seryl-[protein] + ATP = O-phospho-L-seryl-[protein] + ADP + H(+). The enzyme catalyses L-threonyl-[protein] + ATP = O-phospho-L-threonyl-[protein] + ADP + H(+). Its activity is regulated as follows. Activated by RHOA binding. Inhibited by Y-27632. Functionally, protein kinase which is a key regulator of actin cytoskeleton and cell polarity. Involved in regulation of smooth muscle contraction, actin cytoskeleton organization, stress fiber and focal adhesion formation, neurite retraction, cell adhesion and motility via phosphorylation of ADD1, BRCA2, CNN1, EZR, DPYSL2, EP300, MSN, MYL9/MLC2, NPM1, RDX, PPP1R12A and VIM. Phosphorylates SORL1 and IRF4. Acts as a negative regulator of VEGF-induced angiogenic endothelial cell activation. Positively regulates the activation of p42/MAPK1-p44/MAPK3 and of p90RSK/RPS6KA1 during myogenic differentiation. Plays an important role in the timely initiation of centrosome duplication. Inhibits keratinocyte terminal differentiation. May regulate closure of the eyelids and ventral body wall through organization of actomyosin bundles. Plays a critical role in the regulation of spine and synaptic properties in the hippocampus. Plays an important role in generating the circadian rhythm of the aortic myofilament Ca(2+) sensitivity and vascular contractility by modulating the myosin light chain phosphorylation. The chain is Rho-associated protein kinase 2 (ROCK2) from Homo sapiens (Human).